Here is a 289-residue protein sequence, read N- to C-terminus: Protease HtpX (289 aa).

2 consecutive transmembrane segments (helical) span residues 5–25 (IVLF…VMSL) and 33–53 (MSGL…ISLL). His140 contacts Zn(2+). Glu141 is a catalytic residue. Zn(2+) is bound at residue His144. A run of 2 helical transmembrane segments spans residues 155–175 (LLQG…GGFI) and 193–213 (GIVL…TMWF). A Zn(2+)-binding site is contributed by Glu218.

This sequence belongs to the peptidase M48B family. Requires Zn(2+) as cofactor.

It localises to the cell inner membrane. The chain is Protease HtpX from Xylella fastidiosa (strain M12).